The sequence spans 246 residues: 4-hydroxy-tetrahydrodipicolinate reductase (246 aa).

Residues 8–13, 75–77, and 99–102 each bind NAD(+); these read GISGRM, GTT, and ASNY. The active-site Proton donor/acceptor is the His132. His133 is a binding site for (S)-2,3,4,5-tetrahydrodipicolinate. Catalysis depends on Lys136, which acts as the Proton donor. Position 142 to 143 (142 to 143) interacts with (S)-2,3,4,5-tetrahydrodipicolinate; it reads GT.

Belongs to the DapB family.

The protein localises to the cytoplasm. The enzyme catalyses (S)-2,3,4,5-tetrahydrodipicolinate + NAD(+) + H2O = (2S,4S)-4-hydroxy-2,3,4,5-tetrahydrodipicolinate + NADH + H(+). It catalyses the reaction (S)-2,3,4,5-tetrahydrodipicolinate + NADP(+) + H2O = (2S,4S)-4-hydroxy-2,3,4,5-tetrahydrodipicolinate + NADPH + H(+). It participates in amino-acid biosynthesis; L-lysine biosynthesis via DAP pathway; (S)-tetrahydrodipicolinate from L-aspartate: step 4/4. Functionally, catalyzes the conversion of 4-hydroxy-tetrahydrodipicolinate (HTPA) to tetrahydrodipicolinate. This chain is 4-hydroxy-tetrahydrodipicolinate reductase, found in Akkermansia muciniphila (strain ATCC BAA-835 / DSM 22959 / JCM 33894 / BCRC 81048 / CCUG 64013 / CIP 107961 / Muc).